A 378-amino-acid chain; its full sequence is Erythronate-4-phosphate dehydrogenase (378 aa).

S45 and T66 together coordinate substrate. NAD(+) is bound by residues D146 and T175. R208 is a catalytic residue. D232 is a binding site for NAD(+). E237 is a catalytic residue. H254 (proton donor) is an active-site residue. G257 is a binding site for NAD(+). Y258 serves as a coordination point for substrate.

This sequence belongs to the D-isomer specific 2-hydroxyacid dehydrogenase family. PdxB subfamily. As to quaternary structure, homodimer.

The protein localises to the cytoplasm. The enzyme catalyses 4-phospho-D-erythronate + NAD(+) = (R)-3-hydroxy-2-oxo-4-phosphooxybutanoate + NADH + H(+). It functions in the pathway cofactor biosynthesis; pyridoxine 5'-phosphate biosynthesis; pyridoxine 5'-phosphate from D-erythrose 4-phosphate: step 2/5. Functionally, catalyzes the oxidation of erythronate-4-phosphate to 3-hydroxy-2-oxo-4-phosphonooxybutanoate. The sequence is that of Erythronate-4-phosphate dehydrogenase from Escherichia coli O81 (strain ED1a).